Here is a 109-residue protein sequence, read N- to C-terminus: Phycoerythrin alpha-1 subunit (109 aa).

Val6, Ala16, Phe17, Pro20, Asp27, Ala28, and Ala39 together coordinate (2R,3E)-phycocyanobilin.

This sequence belongs to the phycoerythrin family. As to quaternary structure, heterotetramer of 2 identical alpha chains and 2 identical beta chains which form 2 alpha-beta heterodimers within the heterotetramer. The two alpha-beta heterodimers are rotated to an open configuration in contrast to the closed configuration found in other cryptophyte species due to the insertion of a single amino acid, Asp-65, in a conserved region of the alpha chain. In the open form, the central chromophores are not in physical contact but are separated by a water-filled channel. In terms of processing, contains three phycocyanobilin chromophores with binding mediated by both the alpha and beta subunits.

It is found in the plastid. The protein localises to the chloroplast thylakoid membrane. Functionally, light-harvesting photosynthetic tetrapyrrole chromophore-protein from the phycobiliprotein complex. This is Phycoerythrin alpha-1 subunit from Hemiselmis virescens.